Reading from the N-terminus, the 785-residue chain is Proprotein convertase subtilisin/kexin type 7 (785 aa).

An N-terminal signal peptide occupies residues 1–37 (MPKGRQKVPHLDAPLGLPTCLWLELAGLFLLVPWVMG). The propeptide occupies 38-141 (LAGTGGPDGQ…EQRLLRRAKR (104 aa)). Topologically, residues 142–667 (SVHFNDPKYP…YTITPNTLKT (526 aa)) are extracellular. The Peptidase S8 domain occupies 153–473 (QWHLNNRRSP…FGLLNAWRLV (321 aa)). Residues N167 and N175 are each glycosylated (N-linked (GlcNAc...) asparagine). Catalysis depends on D187, which acts as the Charge relay system. The segment at 197–219 (IAPNYSPEGSYDLNSNDPDPMPH) is disordered. H228 serves as the catalytic Charge relay system. N241 carries an N-linked (GlcNAc...) asparagine glycan. Residue S406 is the Charge relay system of the active site. One can recognise a P/Homo B domain in the interval 481 to 618 (SVPYLASYVS…QLTLYGSVWS (138 aa)). The N-linked (GlcNAc...) asparagine glycan is linked to N511. A helical membrane pass occupies residues 668-688 (LVLVGCFTVFWTVYYMLEVYL). Topologically, residues 689-785 (SQRNVASNQV…VPHGKEEQIC (97 aa)) are cytoplasmic. The tract at residues 700–751 (RSGPCHWPHRSRKAKEEGTELESVPLCSSKDPDEVETESRGPPTTSDLLAPD) is disordered.

Belongs to the peptidase S8 family. It depends on Ca(2+) as a cofactor. In terms of processing, cysteine residues in the cytoplasmic tail are probably palmitoylated. Post-translationally, N-glycosylated. Expressed in spleen, thymus, prostate, testis, ovary, small intestine, colon and peripheral blood leukocyte.

It is found in the golgi apparatus. The protein resides in the trans-Golgi network membrane. Inhibited by zinc and copper. Serine endoprotease that processes various proproteins by cleavage at paired basic amino acids, recognizing the RXXX[KR]R consensus motif. Likely functions in the constitutive secretory pathway. In Homo sapiens (Human), this protein is Proprotein convertase subtilisin/kexin type 7 (PCSK7).